Reading from the N-terminus, the 335-residue chain is ETS translocation variant 2 (335 aa).

Disordered regions lie at residues 94-138 and 201-220; these read DPWS…SWSH and GHQSPAFTTPSKSNKQSDRA. Polar residues predominate over residues 205-220; the sequence is PAFTTPSKSNKQSDRA. Residues 234–314 constitute a DNA-binding region (ETS); it reads IQLWQFLLEL…GGRKYTYRFG (81 aa).

This sequence belongs to the ETS family. Testis.

The protein localises to the nucleus. Its function is as follows. Binds to DNA sequences containing the consensus pentanucleotide 5'-CGGA[AT]-3'. This Mus musculus (Mouse) protein is ETS translocation variant 2 (Etv2).